Here is a 212-residue protein sequence, read N- to C-terminus: Uracil phosphoribosyltransferase (212 aa).

5-phospho-alpha-D-ribose 1-diphosphate is bound by residues Arg78, Arg103, and 130–138 (DPMLATGGS). Uracil is bound by residues Ile193 and 198–200 (GDA). Asp199 lines the 5-phospho-alpha-D-ribose 1-diphosphate pocket.

Belongs to the UPRTase family. Mg(2+) serves as cofactor.

It catalyses the reaction UMP + diphosphate = 5-phospho-alpha-D-ribose 1-diphosphate + uracil. The protein operates within pyrimidine metabolism; UMP biosynthesis via salvage pathway; UMP from uracil: step 1/1. Allosterically activated by GTP. In terms of biological role, catalyzes the conversion of uracil and 5-phospho-alpha-D-ribose 1-diphosphate (PRPP) to UMP and diphosphate. The sequence is that of Uracil phosphoribosyltransferase from Pseudomonas paraeruginosa (strain DSM 24068 / PA7) (Pseudomonas aeruginosa (strain PA7)).